The sequence spans 475 residues: Arginine/ornithine antiporter (475 aa).

Helical transmembrane passes span 10–30 (IGLL…GVFG), 42–62 (GPVL…ALSL), 74–94 (GIFS…SGWG), 101–121 (LGNV…FPIF), 157–177 (LVTI…IVLF), 205–225 (NCMM…MLSA), 238–258 (ILGL…PYGY), 283–303 (WGGY…WLSW), 333–353 (PTFA…TLLF), 361–381 (AYSL…AYQI), 397–417 (LLIG…AGVS), and 451–471 (WLIT…VVSG).

The protein belongs to the amino acid-polyamine-organocation (APC) superfamily. Basic amino acid/polyamine antiporter (APA) (TC 2.A.3.2) family.

It is found in the cell membrane. It catalyses the reaction L-ornithine(in) + L-arginine(out) = L-ornithine(out) + L-arginine(in). Catalyzes electroneutral exchange between L-arginine and L-ornithine. The protein is Arginine/ornithine antiporter (arcD) of Latilactobacillus sakei (Lactobacillus sakei).